The following is a 31-amino-acid chain: Photosystem II reaction center protein T (31 aa).

Residues 3–23 (ALVYTFLLVGTLGIIFFAIFF) form a helical membrane-spanning segment.

This sequence belongs to the PsbT family. In terms of assembly, PSII is composed of 1 copy each of membrane proteins PsbA, PsbB, PsbC, PsbD, PsbE, PsbF, PsbH, PsbI, PsbJ, PsbK, PsbL, PsbM, PsbT, PsbY, PsbZ, Psb30/Ycf12, at least 3 peripheral proteins of the oxygen-evolving complex and a large number of cofactors. It forms dimeric complexes.

It localises to the plastid. Its subcellular location is the chloroplast thylakoid membrane. Functionally, found at the monomer-monomer interface of the photosystem II (PS II) dimer, plays a role in assembly and dimerization of PSII. PSII is a light-driven water plastoquinone oxidoreductase, using light energy to abstract electrons from H(2)O, generating a proton gradient subsequently used for ATP formation. The chain is Photosystem II reaction center protein T from Mesostigma viride (Green alga).